The sequence spans 431 residues: Adenylosuccinate synthetase (431 aa).

GTP-binding positions include 13–19 and 41–43; these read GDEGKGK and GHT. Asp14 acts as the Proton acceptor in catalysis. Residues Asp14 and Gly41 each contribute to the Mg(2+) site. IMP-binding positions include 14 to 17, 39 to 42, Thr130, Arg144, Gln225, Thr240, and Arg304; these read DEGK and NAGH. Residue His42 is the Proton donor of the active site. Position 300–306 (300–306) interacts with substrate; that stretch reads ATTHRPR. Residues Arg306, 332–334, and 414–416 each bind GTP; these read KLD and STG.

It belongs to the adenylosuccinate synthetase family. Homodimer. Requires Mg(2+) as cofactor.

It localises to the cytoplasm. The catalysed reaction is IMP + L-aspartate + GTP = N(6)-(1,2-dicarboxyethyl)-AMP + GDP + phosphate + 2 H(+). The protein operates within purine metabolism; AMP biosynthesis via de novo pathway; AMP from IMP: step 1/2. Plays an important role in the de novo pathway of purine nucleotide biosynthesis. Catalyzes the first committed step in the biosynthesis of AMP from IMP. The chain is Adenylosuccinate synthetase from Nitrosococcus oceani (strain ATCC 19707 / BCRC 17464 / JCM 30415 / NCIMB 11848 / C-107).